Consider the following 404-residue polypeptide: Cysteine desulfurase IscS (404 aa).

Pyridoxal 5'-phosphate is bound by residues 75 to 76 (AT), asparagine 155, glutamine 183, and 203 to 205 (SGH). Lysine 206 carries the post-translational modification N6-(pyridoxal phosphate)lysine. Threonine 243 contributes to the pyridoxal 5'-phosphate binding site. Cysteine 328 (cysteine persulfide intermediate) is an active-site residue. Cysteine 328 is a [2Fe-2S] cluster binding site.

Belongs to the class-V pyridoxal-phosphate-dependent aminotransferase family. NifS/IscS subfamily. In terms of assembly, homodimer. Forms a heterotetramer with IscU, interacts with other sulfur acceptors. Requires pyridoxal 5'-phosphate as cofactor.

Its subcellular location is the cytoplasm. The enzyme catalyses (sulfur carrier)-H + L-cysteine = (sulfur carrier)-SH + L-alanine. It participates in cofactor biosynthesis; iron-sulfur cluster biosynthesis. Functionally, master enzyme that delivers sulfur to a number of partners involved in Fe-S cluster assembly, tRNA modification or cofactor biosynthesis. Catalyzes the removal of elemental sulfur atoms from cysteine to produce alanine. Functions as a sulfur delivery protein for Fe-S cluster synthesis onto IscU, an Fe-S scaffold assembly protein, as well as other S acceptor proteins. This Klebsiella pneumoniae (strain 342) protein is Cysteine desulfurase IscS.